The chain runs to 100 residues: Small ribosomal subunit protein bS6 (100 aa).

Belongs to the bacterial ribosomal protein bS6 family.

Functionally, binds together with bS18 to 16S ribosomal RNA. This Tropheryma whipplei (strain Twist) (Whipple's bacillus) protein is Small ribosomal subunit protein bS6.